We begin with the raw amino-acid sequence, 1083 residues long: Neisserial autotransporter lipoprotein NalP (1083 aa).

Positions 1-27 (MRTTPTFPTKTFKPTAMALAVATTLSA) are cleaved as a signal peptide. Cys28 is lipidated: N-palmitoyl cysteine. The S-diacylglycerol cysteine moiety is linked to residue Cys28. The Peptidase S8 domain maps to 111 to 483 (NDAYKNLINL…WGLLDAGKAM (373 aa)). Catalysis depends on charge relay system residues Asp139, His211, and Ser427. The region spanning 809–1083 (DGLDHNGTGL…SGRVGVGYRF (275 aa)) is the Autotransporter domain. Beta stranded transmembrane passes span 819 to 828 (RVIAQTQQDG), 844 to 852 (TQTVGIAAK), 858 to 866 (TAAATLGMG), 883 to 891 (SLFAGIRHD), 897 to 906 (YLKGLFSYGR), 931 to 941 (QLGALGGVNVP), 948 to 958 (LTVEGGLRYDL), 984 to 994 (VGLAGLKLSQP), 1000 to 1010 (VLFATAGVERD), 1041 to 1052 (RLVAGLGADVEF), 1057 to 1066 (NGLARYSYAG), and 1074 to 1083 (SGRVGVGYRF).

It belongs to the peptidase S8 family. In terms of processing, a fusion protein of the first 44 residues with beta-lactamase is lipidated in E.coli, strongly suggesting this is a lipoprotein in situ. The lipidated form is briefly retained on the cell surface which allows it to process its endogenous substrates on the cell surface before the passenger domain is released into the medium.

Its subcellular location is the cell outer membrane. It is found in the cell surface. It localises to the secreted. Major human immunogenic protein. Autotransporter with a secreted protease domain involved in processing other autotransporter proteins including App and IgA. Probably autoprocesses to release the about 70 kDa passenger domain. Processes the lactoferrin receptor lipoprotein subunit (LbpB) extracellularly, releasing it from the cell surface. LbpB release protects bacteria against complement-mediated killing by anti-LbpB antibodies. Processes NHBA. Lipidation slows its auto-processing, probably allowing it to act on endogenous substrates on the cell surface before the passenger domain is released into the medium. The C-terminal beta-barrel domain inserts into the outer membrane where it probably exports the N-terminal passenger domain. Both the cell surface protein (Neisserial autotransporter lipoprotein NalP) and the passenger domain cleave human (host) complement factor C3, generating a shorter alpha chain and a longer beta chain than normal. Functionally, plays a role in extracellular-DNA (eDNA) mediated biofilm formation. In some strains (including cc32 strain H44/76 but not cc11 strain B16B6) eDNA stimulates biofilm formation. When NalP is not expressed (and no longer processes NHBA or IgA) biofilm formation increases. This is probably because the number of positively charged, DNA-binding peptides on the cell surface rises, resulting in increased biofilm formation. Its function is as follows. Cleaves human (host) complement factor C3, generating a shorter alpha chain and a longer beta chain than normal. Does not act on mouse or rabbit C3. Cleavage causes C3b degradation by human CFI and CFH, decreases deposition of C3b on the bacteria surface and probably facilitates complement escape. The protein is Neisserial autotransporter lipoprotein NalP of Neisseria meningitidis serogroup B / serotype 15 (strain H44/76).